The primary structure comprises 122 residues: Large ribosomal subunit protein uL14 (122 aa).

Belongs to the universal ribosomal protein uL14 family. In terms of assembly, part of the 50S ribosomal subunit. Forms a cluster with proteins L3 and L19. In the 70S ribosome, L14 and L19 interact and together make contacts with the 16S rRNA in bridges B5 and B8.

Its function is as follows. Binds to 23S rRNA. Forms part of two intersubunit bridges in the 70S ribosome. The polypeptide is Large ribosomal subunit protein uL14 (Mycobacterium sp. (strain KMS)).